The chain runs to 265 residues: V0 assembly protein 1 (265 aa).

The signal sequence occupies residues 1-24 (MVFGQLYALFIFTLSCCISKTVQA). Residues 25-223 (DSSKESSSFI…ILSSIWTEGL (199 aa)) lie on the Vacuolar side of the membrane. Asn-69, Asn-104, and Asn-172 each carry an N-linked (GlcNAc...) asparagine glycan. The chain crosses the membrane as a helical span at residues 224–244 (LMCLIVSALLLFILIVALSWI). Residues 245 to 265 (SNLDITYGALEKSTNPIKKNN) are Cytoplasmic-facing. The short motif at 262–265 (KKNN) is the ER retention motif element.

The protein belongs to the VOA1 family. As to quaternary structure, V-ATPase is a heteromultimeric enzyme composed of a peripheral catalytic V1 complex (components A to H) attached to an integral membrane V0 proton pore complex (components: a, c, c', c'', d, e, f and VOA1). Interacts with VMA21. Associates with the assembling V0 complex.

The protein resides in the vacuole membrane. It is found in the endoplasmic reticulum membrane. In terms of biological role, accessory component of the V0 complex of vacuolar(H+)-ATPase (V-ATPase), a multisubunit enzyme composed of a peripheral complex (V1) that hydrolyzes ATP and a membrane integral complex (V0) that translocates protons. V-ATPase is responsible for acidifying and maintaining the pH of intracellular compartments. Functions with VMA21 in assembly of the V0 complex. The sequence is that of V0 assembly protein 1 (VOA1) from Saccharomyces cerevisiae (strain ATCC 204508 / S288c) (Baker's yeast).